Here is a 269-residue protein sequence, read N- to C-terminus: Shikimate dehydrogenase (NADP(+)) (269 aa).

Residues 14-16 (SLS) and threonine 61 each bind shikimate. Lysine 65 serves as the catalytic Proton acceptor. Position 76 (glutamate 76) interacts with NADP(+). Shikimate is bound by residues asparagine 85 and aspartate 99. Residues 123 to 127 (GAGGA), 146 to 151 (NRTPER), and isoleucine 209 contribute to the NADP(+) site. Tyrosine 211 is a binding site for shikimate. NADP(+) is bound at residue glycine 231.

The protein belongs to the shikimate dehydrogenase family. Homodimer.

The enzyme catalyses shikimate + NADP(+) = 3-dehydroshikimate + NADPH + H(+). The protein operates within metabolic intermediate biosynthesis; chorismate biosynthesis; chorismate from D-erythrose 4-phosphate and phosphoenolpyruvate: step 4/7. Involved in the biosynthesis of the chorismate, which leads to the biosynthesis of aromatic amino acids. Catalyzes the reversible NADPH linked reduction of 3-dehydroshikimate (DHSA) to yield shikimate (SA). The protein is Shikimate dehydrogenase (NADP(+)) of Methanothrix thermoacetophila (strain DSM 6194 / JCM 14653 / NBRC 101360 / PT) (Methanosaeta thermophila).